A 162-amino-acid chain; its full sequence is uncharacterized protein (162 aa).

This is an uncharacterized protein from Salmonella typhi.